The primary structure comprises 156 residues: Aspartate carbamoyltransferase regulatory chain (156 aa).

Residues C109, C114, C140, and C143 each contribute to the Zn(2+) site.

It belongs to the PyrI family. As to quaternary structure, contains catalytic and regulatory chains. The cofactor is Zn(2+).

Its function is as follows. Involved in allosteric regulation of aspartate carbamoyltransferase. This Methanosarcina barkeri (strain Fusaro / DSM 804) protein is Aspartate carbamoyltransferase regulatory chain.